Consider the following 66-residue polypeptide: Large ribosomal subunit protein bL33c (66 aa).

It belongs to the bacterial ribosomal protein bL33 family.

It is found in the plastid. It localises to the chloroplast. The chain is Large ribosomal subunit protein bL33c from Manihot esculenta (Cassava).